Consider the following 311-residue polypeptide: Porphobilinogen deaminase (311 aa).

Position 241 is an S-(dipyrrolylmethanemethyl)cysteine (Cys241).

The protein belongs to the HMBS family. In terms of assembly, monomer. Requires dipyrromethane as cofactor.

The catalysed reaction is 4 porphobilinogen + H2O = hydroxymethylbilane + 4 NH4(+). It participates in porphyrin-containing compound metabolism; protoporphyrin-IX biosynthesis; coproporphyrinogen-III from 5-aminolevulinate: step 2/4. Its function is as follows. Tetrapolymerization of the monopyrrole PBG into the hydroxymethylbilane pre-uroporphyrinogen in several discrete steps. The polypeptide is Porphobilinogen deaminase (Bacillus pumilus (strain SAFR-032)).